We begin with the raw amino-acid sequence, 354 residues long: Uroporphyrinogen decarboxylase (354 aa).

Substrate-binding positions include 27–31, aspartate 77, tyrosine 154, threonine 209, and histidine 327; that span reads RQAGR.

Belongs to the uroporphyrinogen decarboxylase family. In terms of assembly, homodimer.

It is found in the cytoplasm. It carries out the reaction uroporphyrinogen III + 4 H(+) = coproporphyrinogen III + 4 CO2. It participates in porphyrin-containing compound metabolism; protoporphyrin-IX biosynthesis; coproporphyrinogen-III from 5-aminolevulinate: step 4/4. In terms of biological role, catalyzes the decarboxylation of four acetate groups of uroporphyrinogen-III to yield coproporphyrinogen-III. This chain is Uroporphyrinogen decarboxylase, found in Salmonella newport (strain SL254).